We begin with the raw amino-acid sequence, 179 residues long: Gamma-glutamyl cyclotransferase verK (179 aa).

The protein belongs to the class-I pyridoxal-phosphate-dependent aminotransferase family.

The catalysed reaction is an alpha-(gamma-L-glutamyl)-L-amino acid = 5-oxo-L-proline + an L-alpha-amino acid. It functions in the pathway mycotoxin biosynthesis. Gamma-glutamyl cyclotransferase; part of the gene cluster that mediates the biosynthesis of 11'-deoxyverticillin A, one of the dimeric epipolythiodioxopiperazines (ETPs) from the verticillin family that act as mycotoxins. 11'-deoxyverticillin A is required for normal conidiation. The nonribosomal peptide synthetase verP is speculated to be responsible for condensation of amino acids to form the carbon skeleton of verticillin, whereas the cluster-specific tailoring enzymes are involved in further modifications leading to the production of 11'-deoxyverticillin A. In Clonostachys rogersoniana, this protein is Gamma-glutamyl cyclotransferase verK.